The following is a 165-amino-acid chain: Methylated-DNA--protein-cysteine methyltransferase (165 aa).

Residue Cys126 is the Nucleophile; methyl group acceptor of the active site.

This sequence belongs to the MGMT family.

Its subcellular location is the cytoplasm. The catalysed reaction is a 6-O-methyl-2'-deoxyguanosine in DNA + L-cysteinyl-[protein] = S-methyl-L-cysteinyl-[protein] + a 2'-deoxyguanosine in DNA. It catalyses the reaction a 4-O-methyl-thymidine in DNA + L-cysteinyl-[protein] = a thymidine in DNA + S-methyl-L-cysteinyl-[protein]. Functionally, involved in the cellular defense against the biological effects of O6-methylguanine (O6-MeG) and O4-methylthymine (O4-MeT) in DNA. Repairs the methylated nucleobase in DNA by stoichiometrically transferring the methyl group to a cysteine residue in the enzyme. This is a suicide reaction: the enzyme is irreversibly inactivated. The polypeptide is Methylated-DNA--protein-cysteine methyltransferase (Mycobacterium leprae (strain TN)).